The primary structure comprises 284 residues: Cell division protein FtsQ (284 aa).

The segment covering 1–10 (MAFGKSKNRR) has biased composition (basic residues). The tract at residues 1-23 (MAFGKSKNRRRQDAAQQKEAVRG) is disordered. Topologically, residues 1–34 (MAFGKSKNRRRQDAAQQKEAVRGAVRSQGPRALK) are cytoplasmic. Residues 35-52 (VLGLTLGTGLLVWGGAAL) form a helical membrane-spanning segment. The Periplasmic portion of the chain corresponds to 53 to 284 (REWTLTSPRF…ASERSGASMR (232 aa)). A POTRA domain is found at 62-130 (FELEAVSFSG…NRVSVEVTEH (69 aa)).

This sequence belongs to the FtsQ/DivIB family. FtsQ subfamily.

The protein resides in the cell inner membrane. Its function is as follows. Essential cell division protein. The polypeptide is Cell division protein FtsQ (Myxococcus fulvus (strain ATCC BAA-855 / HW-1)).